The chain runs to 512 residues: Protein maph-9 (512 aa).

Disordered stretches follow at residues isoleucine 24 to phenylalanine 103, aspartate 168 to lysine 386, and glycine 481 to arginine 512. Low complexity-rich tracts occupy residues threonine 30–glycine 39 and serine 78–alanine 95. A compositionally biased stretch (basic and acidic residues) spans threonine 178–lysine 200. Residues proline 230–lysine 239 show a composition bias toward polar residues. 2 stretches are compositionally biased toward basic and acidic residues: residues lysine 260–serine 302 and valine 310–lysine 386. A coiled-coil region spans residues lysine 267–arginine 429. Positions proline 502–arginine 512 are enriched in polar residues.

In terms of tissue distribution, expressed in amphid and phasmid ciliated neurons.

The protein resides in the cell projection. Its subcellular location is the cilium. The protein localises to the cytoplasm. It is found in the cytoskeleton. It localises to the cilium axoneme. This Caenorhabditis elegans protein is Protein maph-9.